We begin with the raw amino-acid sequence, 194 residues long: Large ribosomal subunit protein eL15 (194 aa).

Positions Ser-164 to Lys-194 are disordered. Over residues Lys-167 to Gly-176 the composition is skewed to basic residues. Residues Lys-177–Lys-194 show a composition bias toward basic and acidic residues.

The protein belongs to the eukaryotic ribosomal protein eL15 family.

The polypeptide is Large ribosomal subunit protein eL15 (rpl15e) (Pyrococcus abyssi (strain GE5 / Orsay)).